The chain runs to 459 residues: Argininosuccinate lyase (459 aa).

It belongs to the lyase 1 family. Argininosuccinate lyase subfamily.

The protein resides in the cytoplasm. The catalysed reaction is 2-(N(omega)-L-arginino)succinate = fumarate + L-arginine. Its pathway is amino-acid biosynthesis; L-arginine biosynthesis; L-arginine from L-ornithine and carbamoyl phosphate: step 3/3. This chain is Argininosuccinate lyase, found in Lactococcus lactis subsp. lactis (strain IL1403) (Streptococcus lactis).